A 437-amino-acid polypeptide reads, in one-letter code: MIERYTRKEMGDVWSEVNKFKKWLDVEIAVCRAWAKLGKIPRDALKKIEEKTYVDKKVVEKIKEKEKVFKHDVLAFVSVIAEQVGEEGRYIHMGLTSSDVVDTALALLIREAIDIILKDIDKVMEEIKRLAFEHKDTLMMGRTHGVHAEPYTFGLKMCVWYDEMRRQKERLLFARENVLYGKISGAVGTYSNIPPEVEKLALEELGLKIEPASTQIVHRDRHAQLLTTLGLIASSLEKFATEIRHLQRTEVLEVLEPFTKGQRGSSAMPHKKNPIHSERICGLARVIRANSIPAMEDVVLWHERDISHSSVERVILPDSFIALDYILNLFYEILKGLVVNKERMRKNMELSKGLYASSKILVLLTQKGLSRDYAYDIVQRCAMKAWESDKTFKETLLEDPEVTKYLTEEEIEKALDPWEFLKNRDYVYEKVFGDEMG.

Residues 4–5 (RY), 70–72 (KHD), and 96–97 (TS) each bind N(6)-(1,2-dicarboxyethyl)-AMP. H144 acts as the Proton donor/acceptor in catalysis. Q215 lines the N(6)-(1,2-dicarboxyethyl)-AMP pocket. S265 functions as the Proton donor/acceptor in the catalytic mechanism. Residues S266, 271 to 273 (KKN), and 310 to 314 (SVERV) each bind N(6)-(1,2-dicarboxyethyl)-AMP.

It belongs to the lyase 1 family. Adenylosuccinate lyase subfamily. In terms of assembly, homooligomer. Residues from neighboring subunits contribute catalytic and substrate-binding residues to each active site.

It carries out the reaction N(6)-(1,2-dicarboxyethyl)-AMP = fumarate + AMP. The enzyme catalyses (2S)-2-[5-amino-1-(5-phospho-beta-D-ribosyl)imidazole-4-carboxamido]succinate = 5-amino-1-(5-phospho-beta-D-ribosyl)imidazole-4-carboxamide + fumarate. Its pathway is purine metabolism; AMP biosynthesis via de novo pathway; AMP from IMP: step 2/2. The protein operates within purine metabolism; IMP biosynthesis via de novo pathway; 5-amino-1-(5-phospho-D-ribosyl)imidazole-4-carboxamide from 5-amino-1-(5-phospho-D-ribosyl)imidazole-4-carboxylate: step 2/2. Catalyzes two reactions in de novo purine nucleotide biosynthesis. Catalyzes the breakdown of 5-aminoimidazole- (N-succinylocarboxamide) ribotide (SAICAR or 2-[5-amino-1-(5-phospho-beta-D-ribosyl)imidazole-4-carboxamido]succinate) to 5-aminoimidazole-4-carboxamide ribotide (AICAR or 5-amino-1-(5-phospho-beta-D-ribosyl)imidazole-4-carboxamide) and fumarate, and of adenylosuccinate (ADS or N(6)-(1,2-dicarboxyethyl)-AMP) to adenosine monophosphate (AMP) and fumarate. The protein is Adenylosuccinate lyase (purB) of Aquifex aeolicus (strain VF5).